We begin with the raw amino-acid sequence, 587 residues long: MKDTIRQLIQQALDQLTADGTLPAGLTPDIQVENTKDRSHGDFASNIAMMLAKPAGMKPRDLAARLVEAIPAHEQLAKVEIAGPGFLNFFQDHVWLAASLDRALADERLGVRKAGPAQRVVIDLSSPNLAKEMHVGHLRSTIIGDAVARVLEFLGDTVIRQNHVGDWGTQFGMLLAYLEEQPVDAEAELHDLEVFYRAAKKRFDESPEFADRARELVVKLQAGDPDCLRLWTRFNEISLSHCQKVYDRLGVKLSMADVMGESAYNDDLAQVVADLTAKGLLTEDNGALCVFLEEFRNAEGNPLPVIVQKAGGGYLYATTDLAAMRYRHNVLHADRVLYFVDQRQALHFQQVFEVARRAGFVPAGMELEHMGFGTMNGADGRPFKTRDGGTVKLIDLLEEAESRAYALVKERNEQRAERGEEPFDEVQLREIGRVVGIDSVKYADLSKHRTSDYSFNFELMLSFEGNTAPYLLYACTRVASVFRKLGQGREQLGGKIVLEQPQELALAAQLAQFGDLINNVALKGVPHLLCAYLYELAGLFSSFYEHCPILTAEDPAQKDSRLRLAALTGRTLEQGLELLGLKTLERM.

Residues 127–137 carry the 'HIGH' region motif; the sequence is PNLAKEMHVGH.

This sequence belongs to the class-I aminoacyl-tRNA synthetase family. Monomer.

It localises to the cytoplasm. It carries out the reaction tRNA(Arg) + L-arginine + ATP = L-arginyl-tRNA(Arg) + AMP + diphosphate. This is Arginine--tRNA ligase from Pseudomonas aeruginosa (strain UCBPP-PA14).